The primary structure comprises 242 residues: Dickkopf-like protein 1 (242 aa).

The N-terminal stretch at 1 to 30 (MGEASPPAPARRHLLVLLLLLSTLVIPSAA) is a signal peptide. N-linked (GlcNAc...) asparagine glycosylation is found at Asn-97 and Asn-112.

In terms of assembly, interacts with SLXL1; Co-localize in seminiferous tubules. Interacts with SLY. In terms of processing, N-glycosylated during spermatogenesis. Not N-glycosylated in mature sperm. In terms of tissue distribution, more highly expressed in adult testis than in fetal testis. Exclusively expressed in the testis (at protein level). Intense expression in stages II, III and IV of spermatogenesis, whereas expression is lower in stage I.

The protein localises to the secreted. Its subcellular location is the cytoplasmic vesicle. The protein resides in the secretory vesicle. It localises to the acrosome. Its function is as follows. Involved in fertilization by facilitating sperm penetration of the zona pellucida. May promote spermatocyte apoptosis, thereby limiting sperm production. In adults, may reduce testosterone synthesis in Leydig cells. Is not essential either for development or fertility. The chain is Dickkopf-like protein 1 from Homo sapiens (Human).